The sequence spans 450 residues: Saccharopine dehydrogenase [NADP(+), L-glutamate-forming] (450 aa).

NADP(+) is bound by residues 9-12 (SGFV), 32-34 (CRT), 54-55 (DV), Ile75, 97-98 (TS), 124-126 (VDP), and Ser174. L-saccharopine-binding positions include 98 to 99 (SY) and Asp125. L-saccharopine-binding positions include Arg223 and 244–246 (TLR).

The protein belongs to the saccharopine dehydrogenase family. In terms of assembly, homodimer.

It localises to the cytoplasm. The enzyme catalyses L-saccharopine + NADP(+) + H2O = (S)-2-amino-6-oxohexanoate + L-glutamate + NADPH + H(+). It participates in amino-acid biosynthesis; L-lysine biosynthesis via AAA pathway; L-lysine from L-alpha-aminoadipate (fungal route): step 2/3. The polypeptide is Saccharopine dehydrogenase [NADP(+), L-glutamate-forming] (Schizosaccharomyces pombe (strain 972 / ATCC 24843) (Fission yeast)).